Here is a 1233-residue protein sequence, read N- to C-terminus: Structural maintenance of chromosomes protein 1A (1233 aa).

32–39 (GPNGSGKS) is an ATP binding site. 2 coiled-coil regions span residues 104–124 (EYKI…LEKL) and 163–503 (ELAQ…KAEI). Residues 284-293 (IKEKDSELNQ) show a composition bias toward basic and acidic residues. Disordered stretches follow at residues 284–308 (IKEK…TSHK) and 348–369 (QEFE…TLEE). A phosphoserine mark is found at S358 and S360. An SMC hinge domain is found at 515 to 629 (VYGRLIDLCQ…DNVEDARRIA (115 aa)). Residues K648 and K713 each carry the N6-acetyllysine modification. The stretch at 660 to 935 (KAKARRWDEK…RHNLLQACKM (276 aa)) forms a coiled coil. The disordered stretch occupies residues 947–966 (MDDISQEEGSSQGEDSVSGS). The segment covering 953–966 (EEGSSQGEDSVSGS) has biased composition (low complexity). S957 carries the post-translational modification Phosphoserine; by ATM. S962 is subject to Phosphoserine. S966 is modified (phosphoserine; by ATM and ATR). S970 carries the post-translational modification Phosphoserine. Positions 991–1068 (KDAQAEEEIK…FEQIKKERFD (78 aa)) form a coiled coil. The residue at position 1037 (K1037) is an N6-acetyllysine.

Belongs to the SMC family. SMC1 subfamily. In terms of assembly, forms a heterodimer with SMC3 in cohesin complexes. Cohesin complexes are composed of the SMC1 (SMC1A or SMC1B) and SMC3 heterodimer attached via their SMC hinge domain, RAD21 which link them, and one STAG protein (STAG1, STAG2 or STAG3), which interacts with RAD21. In germ cell cohesin complexes, SMC1A is mutually exclusive with SMC1B. Interacts with BRCA1. Found in a complex with CDCA5, SMC3 and RAD21, PDS5A/SCC-112 and PDS5B/APRIN. Interacts with NDC80. Interacts with BRAT1. Found in a complex containing POLE and SMC3. Interacts with RPGR, STAG3 and SYCP2. The cohesin complex interacts with the cohesin loading complex subunits NIPBL/Scc2 (via HEAT repeats) and MAU2/Scc4. NIPBL directly contacts all members of the complex, RAD21, SMC1A/B, SMC3 and STAG1. In terms of processing, ubiquitinated by the DCX(DCAF15) complex, leading to its degradation. Phosphorylated by ATM upon ionizing radiation in a NBS1-dependent manner. Phosphorylated by ATR upon DNA methylation in a MSH2/MSH6-dependent manner. Phosphorylation of Ser-957 and Ser-966 activates it and is required for S-phase checkpoint activation.

The protein localises to the nucleus. Its subcellular location is the chromosome. It is found in the centromere. It localises to the kinetochore. Functionally, involved in chromosome cohesion during cell cycle and in DNA repair. Central component of cohesin complex. The cohesin complex is required for the cohesion of sister chromatids after DNA replication. The cohesin complex apparently forms a large proteinaceous ring within which sister chromatids can be trapped. At anaphase, the complex is cleaved and dissociates from chromatin, allowing sister chromatids to segregate. The cohesin complex may also play a role in spindle pole assembly during mitosis. Involved in DNA repair via its interaction with BRCA1 and its related phosphorylation by ATM, or via its phosphorylation by ATR. Works as a downstream effector both in the ATM/NBS1 branch and in the ATR/MSH2 branch of S-phase checkpoint. The chain is Structural maintenance of chromosomes protein 1A (SMC1A) from Homo sapiens (Human).